The following is a 149-amino-acid chain: MESLYRIPFTVLECPNLKLKKPSWLHMPSAMTVYAMVVVSYFLITGGIIYDVIVEPPSVGSMTDEHGHQRPVAFLAYRVNGQYIMEGLASSFLFTMGGLGFIILDRSNAPNIPKLNRFLLLFIGFVCVLLSFFMARVFMRMKLPGYLMG.

Residues 1–32 (MESLYRIPFTVLECPNLKLKKPSWLHMPSAMT) are Cytoplasmic-facing. Residues 33-53 (VYAMVVVSYFLITGGIIYDVI) form a helical membrane-spanning segment. Over 54–83 (VEPPSVGSMTDEHGHQRPVAFLAYRVNGQY) the chain is Extracellular. A helical membrane pass occupies residues 84-104 (IMEGLASSFLFTMGGLGFIIL). The Cytoplasmic portion of the chain corresponds to 105–117 (DRSNAPNIPKLNR). Residues 118 to 138 (FLLLFIGFVCVLLSFFMARVF) form a helical membrane-spanning segment. The Extracellular portion of the chain corresponds to 139-149 (MRMKLPGYLMG).

This sequence belongs to the OSTC family. In terms of assembly, specific component of the STT3A-containing form of the oligosaccharyltransferase (OST) complex.

It is found in the membrane. The protein operates within protein modification; protein glycosylation. In terms of biological role, specific component of the STT3A-containing form of the oligosaccharyl transferase (OST) complex that catalyzes the initial transfer of a defined glycan (Glc(3)Man(9)GlcNAc(2) in eukaryotes) from the lipid carrier dolichol-pyrophosphate to an asparagine residue within an Asn-X-Ser/Thr consensus motif in nascent polypeptide chains, the first step in protein N-glycosylation. N-glycosylation occurs cotranslationally and the complex associates with the Sec61 complex at the channel-forming translocon complex that mediates protein translocation across the endoplasmic reticulum (ER). All subunits are required for a maximal enzyme activity. The sequence is that of Oligosaccharyltransferase complex subunit ostc-B from Xenopus laevis (African clawed frog).